The primary structure comprises 367 residues: Avirulence protein ATR5 (367 aa).

An N-terminal signal peptide occupies residues 1-16 (MRLISPALVVSTAIQA). Asn-20 carries an N-linked (GlcNAc...) asparagine glycan. Positions 33–65 (NPLASAHPPDVGYDGVPAGRVRNPDDPTTEERT) are disordered. The span at 54–65 (RNPDDPTTEERT) shows a compositional bias: basic and acidic residues. Residues 61 to 64 (TEER) carry the dEER motif.

It belongs to the RxLR effector family.

The protein localises to the secreted. Its subcellular location is the host cell. Its function is as follows. Secreted effector that acts as an elicitor of hypersensitive response (HR) specifically on plants carrying defense protein RPP5. The protein is Avirulence protein ATR5 of Hyaloperonospora arabidopsidis (strain Emoy2) (Downy mildew agent).